Consider the following 232-residue polypeptide: tRNA (guanine-N(1)-)-methyltransferase (232 aa).

Residues G108 and 128-133 (IGDFIM) each bind S-adenosyl-L-methionine.

This sequence belongs to the RNA methyltransferase TrmD family. As to quaternary structure, homodimer.

It is found in the cytoplasm. The enzyme catalyses guanosine(37) in tRNA + S-adenosyl-L-methionine = N(1)-methylguanosine(37) in tRNA + S-adenosyl-L-homocysteine + H(+). Specifically methylates guanosine-37 in various tRNAs. In Campylobacter fetus subsp. fetus (strain 82-40), this protein is tRNA (guanine-N(1)-)-methyltransferase.